The following is a 309-amino-acid chain: MKKWTFDEAKEIFSFSFMELVYQAQTIHRANFDPNKIQISSLLSIKTGSCPENCKFCPQSSHYKTYVKKEPLMQIEDVITAAKRAKAAGSTRFCMGAAWRGPRDEDLKLVCEMIKEVKKLGLETCVTLGLLKEHQAVTLKEAGLDFYNHNIDTSEEFYNKIITTRTFQDRLDTLRYVRASGMKVCCGGILGMGETNDDRINMILTLANLEEPAESVTINKLIKIPGTPLENVQDIDPFDFVRVIALARIMIPKSYIRLSAGREQMSDELQALCIMAGVYSIFYGEKILTSANPMPERDNDLFQKLGIIH.

The Radical SAM core domain maps to 35–259 (NKIQISSLLS…MIPKSYIRLS (225 aa)). [4Fe-4S] cluster contacts are provided by C50, C54, and C57. Residues C94, C125, C185, and R257 each coordinate [2Fe-2S] cluster.

Belongs to the radical SAM superfamily. Biotin synthase family. As to quaternary structure, homodimer. [4Fe-4S] cluster is required as a cofactor. It depends on [2Fe-2S] cluster as a cofactor.

It carries out the reaction (4R,5S)-dethiobiotin + (sulfur carrier)-SH + 2 reduced [2Fe-2S]-[ferredoxin] + 2 S-adenosyl-L-methionine = (sulfur carrier)-H + biotin + 2 5'-deoxyadenosine + 2 L-methionine + 2 oxidized [2Fe-2S]-[ferredoxin]. It functions in the pathway cofactor biosynthesis; biotin biosynthesis; biotin from 7,8-diaminononanoate: step 2/2. Catalyzes the conversion of dethiobiotin (DTB) to biotin by the insertion of a sulfur atom into dethiobiotin via a radical-based mechanism. In Rickettsia felis (strain ATCC VR-1525 / URRWXCal2) (Rickettsia azadi), this protein is Biotin synthase.